A 469-amino-acid chain; its full sequence is MDSAVTAVLAGKYPAKQHARRVAEALKASGHDGSGVIYLEGTKTRMAEDSDEAVPFRQRRNFYYLSGCELADSYVTYNIDQDELVLYIPAADPDEVMWTGLPLSPEEALKKYDVDKVLASSEINAHLAHYCTNKETAPKRVYAIPDRVCAETTFLPFDDTNWDALSNALNQCRKVKDDYEIALLKRSNEISALAHLAVMKAAKLAKNERELEAVFRSTCLSHGSRGQSYGPIVAAGVNGATLHYQTNDMDLEDPVTGERPSLLVDAGGEYRLYCSDITRAYPLSGKFSVEARQIYDIVLDMQTQCMDMIKPGVAWDDIHARAHKVAISGLLRLGILRGSEEELFEKRISVAFFPHGLGHYMGMDTHDVGGNPNHADPNPMFRYLRLRGTLSPSEVVTVEPGVYFCRFIIEPYLSSPELGKYIDSAVLDKYWKVGGVRIEDNLVITQDGYLNLTTAPKDPEEVERIVQQG.

Mn(2+)-binding residues include aspartate 265, aspartate 276, glutamate 399, and glutamate 439.

The protein belongs to the peptidase M24B family. Mn(2+) is required as a cofactor.

The enzyme catalyses Release of any N-terminal amino acid, including proline, that is linked to proline, even from a dipeptide or tripeptide.. Catalyzes the removal of a penultimate prolyl residue from the N-termini of peptides. The sequence is that of Probable Xaa-Pro aminopeptidase PEPP (PEPP) from Coccidioides posadasii (strain C735) (Valley fever fungus).